Reading from the N-terminus, the 94-residue chain is Phosphoribosyl-ATP pyrophosphatase (94 aa).

This sequence belongs to the PRA-PH family.

The protein resides in the cytoplasm. The enzyme catalyses 1-(5-phospho-beta-D-ribosyl)-ATP + H2O = 1-(5-phospho-beta-D-ribosyl)-5'-AMP + diphosphate + H(+). The protein operates within amino-acid biosynthesis; L-histidine biosynthesis; L-histidine from 5-phospho-alpha-D-ribose 1-diphosphate: step 2/9. This Sulfurisphaera tokodaii (strain DSM 16993 / JCM 10545 / NBRC 100140 / 7) (Sulfolobus tokodaii) protein is Phosphoribosyl-ATP pyrophosphatase (hisE).